Reading from the N-terminus, the 246-residue chain is 4-hydroxy-tetrahydrodipicolinate reductase (246 aa).

An NAD(+)-binding site is contributed by 7-12; sequence GCSGRM. R34 is an NADP(+) binding site. NAD(+)-binding positions include 76–78 and 102–105; these read ATT and CPNT. H135 serves as the catalytic Proton donor/acceptor. H136 contacts (S)-2,3,4,5-tetrahydrodipicolinate. The active-site Proton donor is the K139. 145 to 146 is a binding site for (S)-2,3,4,5-tetrahydrodipicolinate; it reads GT.

This sequence belongs to the DapB family.

It localises to the cytoplasm. The catalysed reaction is (S)-2,3,4,5-tetrahydrodipicolinate + NAD(+) + H2O = (2S,4S)-4-hydroxy-2,3,4,5-tetrahydrodipicolinate + NADH + H(+). It carries out the reaction (S)-2,3,4,5-tetrahydrodipicolinate + NADP(+) + H2O = (2S,4S)-4-hydroxy-2,3,4,5-tetrahydrodipicolinate + NADPH + H(+). Its pathway is amino-acid biosynthesis; L-lysine biosynthesis via DAP pathway; (S)-tetrahydrodipicolinate from L-aspartate: step 4/4. Functionally, catalyzes the conversion of 4-hydroxy-tetrahydrodipicolinate (HTPA) to tetrahydrodipicolinate. This chain is 4-hydroxy-tetrahydrodipicolinate reductase, found in Chlamydia felis (strain Fe/C-56) (Chlamydophila felis).